A 132-amino-acid polypeptide reads, in one-letter code: Myelin P2 protein (132 aa).

Serine 2 is modified (N-acetylserine). (9Z)-octadecenoate is bound by residues arginine 107 and 127-129; that span reads RIY. Residues arginine 107 and 127–129 contribute to the hexadecanoate site; that span reads RIY.

Belongs to the calycin superfamily. Fatty-acid binding protein (FABP) family. Monomer.

The protein resides in the cytoplasm. Functionally, may play a role in lipid transport protein in Schwann cells. May bind cholesterol. The protein is Myelin P2 protein (Pmp2) of Mus musculus (Mouse).